We begin with the raw amino-acid sequence, 95 residues long: Small ribosomal subunit protein bS18 (95 aa).

The protein belongs to the bacterial ribosomal protein bS18 family. Part of the 30S ribosomal subunit. Forms a tight heterodimer with protein bS6.

Binds as a heterodimer with protein bS6 to the central domain of the 16S rRNA, where it helps stabilize the platform of the 30S subunit. This chain is Small ribosomal subunit protein bS18, found in Rickettsia felis (strain ATCC VR-1525 / URRWXCal2) (Rickettsia azadi).